The chain runs to 280 residues: uncharacterized protein (280 aa).

This sequence to E.coli YgfZ (UP14) and B.aphidicola (subsp. Acyrthosiphon pisum) BU435.

This is an uncharacterized protein from Haemophilus influenzae (strain ATCC 51907 / DSM 11121 / KW20 / Rd).